The sequence spans 254 residues: MVRVVIESELVRTEKELPNSLKLRQFKDRLYHVTGVEPEDMEIVVKRQYDNKEIYSTKKGGAYSNEDEDANFLKGEEELIVVVTDSNAQSISNQLATQAEGIPSMEVISEEDYLRRDQSVLRWKMAHGYGRFNAAQQSQRAALAKQDEAYAREQLTAAIGRHCRVTVDGSAPREAILRYVGPLPLDVMGTWCGVEFPEAAGKNDGRINGVTLFGPVAPGHGSFVRPRAVEILSKDEESAEVEDVHDDVESDDEI.

In terms of domain architecture, CAP-Gly spans proline 182 to arginine 225. Residues lysine 234–isoleucine 254 are disordered. Residues glutamate 237–isoleucine 254 are compositionally biased toward acidic residues.

Belongs to the TBCB family. In terms of assembly, binds to monomeric alpha-tubulin.

The protein localises to the cytoplasm. Its subcellular location is the cytoskeleton. Acts to sequester alpha-tubulin from interaction with beta-tubulin, raising the possibility that it plays a regulatory role in the formation of the tubulin heterodimer. This chain is Tubulin-specific chaperone B (ALF1), found in Saccharomyces cerevisiae (strain ATCC 204508 / S288c) (Baker's yeast).